The primary structure comprises 584 residues: WD repeat-containing protein JIP5 (584 aa).

4 WD repeats span residues 128–173 (RHKG…GKVD), 180–219 (SAKDKLTKLCHSTTHPFLLSGTEDGHVLVYDSSNLGGTNK), 269–314 (DQED…LADQ), and 378–415 (DAVDEVGVLDIDYDYRLISAGMDSLKIWSNRYSDDQEE). 2 disordered regions span residues 409–497 (YSDD…SEYI) and 516–563 (KKLI…EKKV). Composition is skewed to acidic residues over residues 412-429 (DQEEEEEEEEEEEEEEDS) and 450-460 (FDSENNDDGEE). 2 stretches are compositionally biased toward basic and acidic residues: residues 483–493 (TRNEENKDNTK) and 528–552 (SKKEDDGDDNNKSLQEQEKAEEVPQ).

This sequence belongs to the WD repeat WDR55 family.

The protein localises to the nucleus. Its subcellular location is the nucleolus. In Lodderomyces elongisporus (strain ATCC 11503 / CBS 2605 / JCM 1781 / NBRC 1676 / NRRL YB-4239) (Yeast), this protein is WD repeat-containing protein JIP5 (JIP5).